The following is a 117-amino-acid chain: Ribonuclease P protein component (117 aa).

This sequence belongs to the RnpA family. As to quaternary structure, consists of a catalytic RNA component (M1 or rnpB) and a protein subunit.

It carries out the reaction Endonucleolytic cleavage of RNA, removing 5'-extranucleotides from tRNA precursor.. RNaseP catalyzes the removal of the 5'-leader sequence from pre-tRNA to produce the mature 5'-terminus. It can also cleave other RNA substrates such as 4.5S RNA. The protein component plays an auxiliary but essential role in vivo by binding to the 5'-leader sequence and broadening the substrate specificity of the ribozyme. The sequence is that of Ribonuclease P protein component from Thermotoga sp. (strain RQ2).